A 797-amino-acid polypeptide reads, in one-letter code: Trafficking protein particle complex subunit 12 (797 aa).

Disordered stretches follow at residues 1-257 and 286-338; these read META…PSLS and SNPN…VPES. Over residues 9 to 23 the composition is skewed to low complexity; that stretch reads QSPSEASPSAQAGPE. A compositionally biased stretch (basic and acidic residues) spans 29–43; it reads MSREEESQPLYHEET. The segment covering 47 to 58 has biased composition (acidic residues); it reads GGDEFASEENEP. Basic and acidic residues-rich tracts occupy residues 66 to 75 and 107 to 121; these read FGDKLNEHMM and ATDHRLPSSTDKEVV. Phosphoserine is present on residues serine 125 and serine 128. Phosphothreonine is present on threonine 130. Positions 173-185 are enriched in basic and acidic residues; sequence VGPKDSLAPREEQ. The span at 206–216 shows a compositional bias: polar residues; the sequence is IFSQATATPSQ. Over residues 232 to 244 the composition is skewed to low complexity; the sequence is SPSFSSTSETSAK. A phosphoserine mark is found at serine 234, serine 309, and serine 314. TPR repeat units lie at residues 607–640, 642–675, 682–715, and 716–749; these read GRVLYSMANCLLLMKDYVLAVDAYLTVIKYYPEQ, PQLLSGIGRILLQIGDIKTAEKYFQDVEKVTQKL, IMVLMNRAFLYLGQNNFAEAHKFFTEILRMDPTN, and AVANNNAAVCLLYLGKLKDSLRQLEAMVQQDPRH.

In terms of assembly, component of the multisubunit TRAPP (transport protein particle) complex, which includes at least TRAPPC2, TRAPPC2L, TRAPPC3, TRAPPC3L, TRAPPC4, TRAPPC5, TRAPPC8, TRAPPC9, TRAPPC10, TRAPPC11 and TRAPPC12. Interacts with CENPE. In terms of processing, phosphorylated as the cells enter mitosis but is dephosphorylated at or before the onset of anaphase. The phosphorylated form recruits CENPE to kinetochores more efficiently than the non-phosphorylated form.

Its subcellular location is the endoplasmic reticulum-Golgi intermediate compartment. It localises to the nucleus. In terms of biological role, component of the TRAPP complex, which is involved in endoplasmic reticulum to Golgi apparatus trafficking at a very early stage. Also plays a role in chromosome congression, kinetochore assembly and stability and controls the recruitment of CENPE to the kinetochores. This Mus musculus (Mouse) protein is Trafficking protein particle complex subunit 12.